A 540-amino-acid chain; its full sequence is Phosphoenolpyruvate carboxykinase (ATP) (540 aa).

R65 serves as a coordination point for substrate. K87 is subject to N6-acetyllysine. Residues Y207 and K213 each coordinate substrate. Residues K213, H232, and 248–256 contribute to the ATP site; that span reads GLSGTGKTT. Residues K213 and H232 each contribute to the Mn(2+) site. Mn(2+) is bound at residue D269. Residues E297, R333, 449-450, and T455 contribute to the ATP site; that span reads RI. R333 contributes to the substrate binding site. K523 carries the post-translational modification N6-acetyllysine.

Belongs to the phosphoenolpyruvate carboxykinase (ATP) family. In terms of assembly, monomer. Requires Mn(2+) as cofactor.

Its subcellular location is the cytoplasm. It carries out the reaction oxaloacetate + ATP = phosphoenolpyruvate + ADP + CO2. It participates in carbohydrate biosynthesis; gluconeogenesis. Involved in the gluconeogenesis. Catalyzes the conversion of oxaloacetate (OAA) to phosphoenolpyruvate (PEP) through direct phosphoryl transfer between the nucleoside triphosphate and OAA. The protein is Phosphoenolpyruvate carboxykinase (ATP) of Escherichia coli O45:K1 (strain S88 / ExPEC).